We begin with the raw amino-acid sequence, 329 residues long: Sex comb on midleg-like protein 1 (329 aa).

Positions 125 to 194 (NEVHESFSYP…SDFSEHNYQP (70 aa)) are disordered. Ser138 carries the post-translational modification Phosphoserine. Residues 159–168 (FRMEEYQRAE) show a composition bias toward basic and acidic residues. Ser238 carries the phosphoserine modification. The SAM domain maps to 258-325 (WSVEAVVLFL…YYIDRLKQGK (68 aa)).

The protein belongs to the SCM family. Highly expressed in testis and pancreas. Preferentially expressed in the germ stem cells of testis.

The protein localises to the nucleus. Its function is as follows. Putative Polycomb group (PcG) protein. PcG proteins act by forming multiprotein complexes, which are required to maintain the transcriptionally repressive state of homeotic genes throughout development. May be involved in spermatogenesis during sexual maturation. This chain is Sex comb on midleg-like protein 1 (SCML1), found in Macaca mulatta (Rhesus macaque).